Reading from the N-terminus, the 461-residue chain is Sensor histidine kinase MctS (461 aa).

A run of 2 helical transmembrane segments spans residues 7–27 (IIAL…TFIT) and 203–223 (FVIV…TCML). His259 is subject to Phosphohistidine; by autocatalysis. The Histidine kinase domain occupies 360–450 (LYRVAQEAFN…TLTAMMPKSA (91 aa)).

The protein localises to the cell membrane. It carries out the reaction ATP + protein L-histidine = ADP + protein N-phospho-L-histidine.. Functionally, member of the two-component regulatory system MctS/MctR, which activates mctP expression. This Rhizobium johnstonii (strain DSM 114642 / LMG 32736 / 3841) (Rhizobium leguminosarum bv. viciae) protein is Sensor histidine kinase MctS.